The following is a 74-amino-acid chain: Defensin-like protein 39 (74 aa).

A signal peptide spans M1–A28. 4 disulfide bridges follow: C31/C74, C42/C63, C48/C68, and C52/C70.

This sequence belongs to the DEFL family. In terms of tissue distribution, pods.

The protein localises to the secreted. Functionally, possesses antifungal activity. This chain is Defensin-like protein 39 (PI39), found in Pisum sativum (Garden pea).